A 540-amino-acid polypeptide reads, in one-letter code: Acetyl-coenzyme A carboxylase carboxyl transferase subunit beta, chloroplastic (540 aa).

The interval 229–249 is disordered; it reads YSDNGSSSIRTRTSTSSGSSY. The segment covering 233–248 has biased composition (low complexity); it reads GSSSIRTRTSTSSGSS. In terms of domain architecture, CoA carboxyltransferase N-terminal spans 267–538; sequence LWVQCENCYA…TFHPLKSNKV (272 aa). C271, C274, C290, and C293 together coordinate Zn(2+). The segment at 271-293 adopts a C4-type zinc-finger fold; sequence CENCYALNYNKLFRSKMNVCEQC.

This sequence belongs to the AccD/PCCB family. As to quaternary structure, acetyl-CoA carboxylase is a heterohexamer composed of biotin carboxyl carrier protein, biotin carboxylase and 2 subunits each of ACCase subunit alpha and ACCase plastid-coded subunit beta (accD). Zn(2+) is required as a cofactor.

The protein resides in the plastid. The protein localises to the chloroplast stroma. It catalyses the reaction N(6)-carboxybiotinyl-L-lysyl-[protein] + acetyl-CoA = N(6)-biotinyl-L-lysyl-[protein] + malonyl-CoA. Its pathway is lipid metabolism; malonyl-CoA biosynthesis; malonyl-CoA from acetyl-CoA: step 1/1. In terms of biological role, component of the acetyl coenzyme A carboxylase (ACC) complex. Biotin carboxylase (BC) catalyzes the carboxylation of biotin on its carrier protein (BCCP) and then the CO(2) group is transferred by the transcarboxylase to acetyl-CoA to form malonyl-CoA. The polypeptide is Acetyl-coenzyme A carboxylase carboxyl transferase subunit beta, chloroplastic (Amborella trichopoda).